Consider the following 127-residue polypeptide: Holo-[acyl-carrier-protein] synthase (127 aa).

Mg(2+) is bound by residues aspartate 9 and glutamate 58.

It belongs to the P-Pant transferase superfamily. AcpS family. Requires Mg(2+) as cofactor.

It localises to the cytoplasm. The catalysed reaction is apo-[ACP] + CoA = holo-[ACP] + adenosine 3',5'-bisphosphate + H(+). In terms of biological role, transfers the 4'-phosphopantetheine moiety from coenzyme A to a Ser of acyl-carrier-protein. The chain is Holo-[acyl-carrier-protein] synthase from Shewanella sp. (strain MR-4).